Consider the following 275-residue polypeptide: Release factor glutamine methyltransferase (275 aa).

S-adenosyl-L-methionine contacts are provided by residues 117 to 121 (GTGSG), aspartate 140, tryptophan 168, and asparagine 182. 182 to 185 (NPPY) contacts substrate.

Belongs to the protein N5-glutamine methyltransferase family. PrmC subfamily.

The catalysed reaction is L-glutaminyl-[peptide chain release factor] + S-adenosyl-L-methionine = N(5)-methyl-L-glutaminyl-[peptide chain release factor] + S-adenosyl-L-homocysteine + H(+). Functionally, methylates the class 1 translation termination release factors RF1/PrfA and RF2/PrfB on the glutamine residue of the universally conserved GGQ motif. In Buchnera aphidicola subsp. Schizaphis graminum (strain Sg), this protein is Release factor glutamine methyltransferase.